The primary structure comprises 508 residues: Photosystem II CP47 reaction center protein (508 aa).

The next 6 membrane-spanning stretches (helical) occupy residues Ser21–Ser36, Ile101–Trp115, Gly140–Phe156, Ile203–Ser218, Val237–Val252, and Ser457–Arg472.

It belongs to the PsbB/PsbC family. PsbB subfamily. As to quaternary structure, PSII is composed of 1 copy each of membrane proteins PsbA, PsbB, PsbC, PsbD, PsbE, PsbF, PsbH, PsbI, PsbJ, PsbK, PsbL, PsbM, PsbT, PsbX, PsbY, PsbZ, Psb30/Ycf12, at least 3 peripheral proteins of the oxygen-evolving complex and a large number of cofactors. It forms dimeric complexes. The cofactor is Binds multiple chlorophylls. PSII binds additional chlorophylls, carotenoids and specific lipids..

It is found in the plastid. The protein localises to the chloroplast thylakoid membrane. Functionally, one of the components of the core complex of photosystem II (PSII). It binds chlorophyll and helps catalyze the primary light-induced photochemical processes of PSII. PSII is a light-driven water:plastoquinone oxidoreductase, using light energy to abstract electrons from H(2)O, generating O(2) and a proton gradient subsequently used for ATP formation. The polypeptide is Photosystem II CP47 reaction center protein (Lactuca sativa (Garden lettuce)).